We begin with the raw amino-acid sequence, 156 residues long: Ribosomal RNA large subunit methyltransferase H (156 aa).

Residues L73, G104, and 123–128 contribute to the S-adenosyl-L-methionine site; that span reads IGPLTL.

The protein belongs to the RNA methyltransferase RlmH family. Homodimer.

It is found in the cytoplasm. The catalysed reaction is pseudouridine(1915) in 23S rRNA + S-adenosyl-L-methionine = N(3)-methylpseudouridine(1915) in 23S rRNA + S-adenosyl-L-homocysteine + H(+). In terms of biological role, specifically methylates the pseudouridine at position 1915 (m3Psi1915) in 23S rRNA. The protein is Ribosomal RNA large subunit methyltransferase H of Xanthomonas euvesicatoria pv. vesicatoria (strain 85-10) (Xanthomonas campestris pv. vesicatoria).